The chain runs to 250 residues: NAD(P)H-quinone oxidoreductase subunit K (250 aa).

Residues cysteine 60, cysteine 61, cysteine 125, and cysteine 156 each contribute to the [4Fe-4S] cluster site. Positions 230–250 are disordered; it reads ELNTPEIDVSPASQSSSTYES. The span at 240 to 250 shows a compositional bias: polar residues; sequence PASQSSSTYES.

It belongs to the complex I 20 kDa subunit family. As to quaternary structure, NDH-1 can be composed of about 15 different subunits; different subcomplexes with different compositions have been identified which probably have different functions. [4Fe-4S] cluster serves as cofactor.

It is found in the cellular thylakoid membrane. The enzyme catalyses a plastoquinone + NADH + (n+1) H(+)(in) = a plastoquinol + NAD(+) + n H(+)(out). It carries out the reaction a plastoquinone + NADPH + (n+1) H(+)(in) = a plastoquinol + NADP(+) + n H(+)(out). NDH-1 shuttles electrons from an unknown electron donor, via FMN and iron-sulfur (Fe-S) centers, to quinones in the respiratory and/or the photosynthetic chain. The immediate electron acceptor for the enzyme in this species is believed to be plastoquinone. Couples the redox reaction to proton translocation, and thus conserves the redox energy in a proton gradient. Cyanobacterial NDH-1 also plays a role in inorganic carbon-concentration. The protein is NAD(P)H-quinone oxidoreductase subunit K of Prochlorococcus marinus (strain MIT 9313).